A 554-amino-acid polypeptide reads, in one-letter code: MFCIQCEQTIRTPAGNGCSYAQGMCGKLAATSDLQDLLIYMLQGVSVYATKARELGVINPEVDTFVPKAFFSTLTNVNFDDERIIAYAKQAAEYRESLKNAYEAACETAGKRAESLPPVAQFVLGTSKPEMLSQAPVALLNKDKNEIHEDILGLRLLCLYGLKGAAAYMEHARVLGKTDAEIAGRFHEIMAFLGEPSVDADKLFTTAMDIGQLNYRIMAMLDAGETEAFGHPEPTVVNTKPVKGKAILVSGHDMKDLELILEQTAGKGINVYTHGEMLPALAYPAFKKYAHLVGNYGSAWQNQQKEFANFPGAVVMTSNCIIDPNVGQYSDRIFTRSIVGWPGVTHVIGDDFSVVIDKALSLDGFQYDEIPHNITIGFARNALMAAAPTVVENVKNGSIKHFFLVGGCDGDKSERSYFTDLAKSAPKDSVILTLGCGKYKFNKLEFGDINGIPRLLDIGQCNDAYSAIQLAIALSQIFECDINELPLNLVLSWFEQKAIVVLLTLLSLGVKNIRTGPTPPAFLTANLAKILEEKFGLRNTTTVEADLKTMLNVA.

[2Fe-2S] cluster-binding residues include Cys-3, Cys-6, Cys-18, and Cys-25. Residues His-252, Glu-276, Cys-320, Cys-408, Cys-436, Cys-461, Glu-495, and Lys-497 each contribute to the hybrid [4Fe-2O-2S] cluster site. The residue at position 408 (Cys-408) is a Cysteine persulfide.

Belongs to the HCP family. It depends on [2Fe-2S] cluster as a cofactor. The cofactor is hybrid [4Fe-2O-2S] cluster.

Its subcellular location is the cytoplasm. It catalyses the reaction A + NH4(+) + H2O = hydroxylamine + AH2 + H(+). In terms of biological role, catalyzes the reduction of hydroxylamine to form NH(3) and H(2)O. The sequence is that of Hydroxylamine reductase from Shewanella sp. (strain MR-7).